We begin with the raw amino-acid sequence, 437 residues long: Probable carboxypeptidase HCBG_00059 (437 aa).

The N-terminal stretch at 1 to 20 is a signal peptide; it reads MKLSNLAALLSASTVAPVAA. Residue asparagine 153 is glycosylated (N-linked (GlcNAc...) asparagine). Aspartate 163 contributes to the Zn(2+) binding site. Glutamate 195 serves as the catalytic Proton acceptor. Glutamate 196 is a Zn(2+) binding site. A glycan (N-linked (GlcNAc...) asparagine) is linked at asparagine 346.

The protein belongs to the peptidase M20A family. It depends on Zn(2+) as a cofactor.

It is found in the secreted. This is Probable carboxypeptidase HCBG_00059 from Ajellomyces capsulatus (strain G186AR / H82 / ATCC MYA-2454 / RMSCC 2432) (Darling's disease fungus).